Consider the following 456-residue polypeptide: CCA-adding enzyme (456 aa).

Positions 53 and 56 each coordinate ATP. CTP-binding residues include serine 53 and lysine 56. Mg(2+) contacts are provided by aspartate 65, aspartate 67, and aspartate 119. Positions 142, 161, and 170 each coordinate ATP. The CTP site is built by histidine 142, lysine 161, and tyrosine 170.

It belongs to the tRNA nucleotidyltransferase/poly(A) polymerase family. Archaeal CCA-adding enzyme subfamily. In terms of assembly, homodimer. Mg(2+) serves as cofactor.

The catalysed reaction is a tRNA precursor + 2 CTP + ATP = a tRNA with a 3' CCA end + 3 diphosphate. It carries out the reaction a tRNA with a 3' CCA end + 2 CTP + ATP = a tRNA with a 3' CCACCA end + 3 diphosphate. Catalyzes the addition and repair of the essential 3'-terminal CCA sequence in tRNAs without using a nucleic acid template. Adds these three nucleotides in the order of C, C, and A to the tRNA nucleotide-73, using CTP and ATP as substrates and producing inorganic pyrophosphate. tRNA 3'-terminal CCA addition is required both for tRNA processing and repair. Also involved in tRNA surveillance by mediating tandem CCA addition to generate a CCACCA at the 3' terminus of unstable tRNAs. While stable tRNAs receive only 3'-terminal CCA, unstable tRNAs are marked with CCACCA and rapidly degraded. The protein is CCA-adding enzyme of Thermococcus kodakarensis (strain ATCC BAA-918 / JCM 12380 / KOD1) (Pyrococcus kodakaraensis (strain KOD1)).